A 97-amino-acid polypeptide reads, in one-letter code: MDPKISEMHPALRLVDPQIQLAVTRMENAVGRDQNNVGPKVYPIILRLGSPLSLNMARKTLNSLEDKAFQLTPIAVQMTKLATTEELPDEFVVVTVK.

Positions 8-97 (MHPALRLVDP…PDEFVVVTVK (90 aa)) constitute a 9b domain. The Nuclear export signal motif lies at 45–53 (ILRLGSPLS).

This sequence belongs to the coronavirus group 2 protein 9b family. In terms of assembly, homodimer. Interacts with host TOMM70; the interaction occurs only with monomer.

Its subcellular location is the host cytoplasm. The protein localises to the host mitochondrion. Its function is as follows. Plays a role in inhibiting the host innate immune response by targeting the mitochondrial-associated innate immune response. Acts by binding to host TOMM70, inhibiting its binding to HSP90AB1 thereby disrupting the interferon activation pathway. The protein is ORF9b protein of Homo sapiens (Human).